Here is a 369-residue protein sequence, read N- to C-terminus: Homoserine O-succinyltransferase (369 aa).

Residues 1-21 form a disordered region; that stretch reads MVRIVPSARRTRAPAKLDGRS. One can recognise an AB hydrolase-1 domain in the interval 86–350; that stretch reads VVFVAGGISA…PFGHDAFLKE (265 aa). Positions 92–95 are important for substrate specificity; it reads GISA. Residue Ser-172 is the Nucleophile of the active site. A substrate-binding site is contributed by Arg-233. Active-site residues include Asp-314 and His-344. Substrate is bound at residue Asp-345.

This sequence belongs to the AB hydrolase superfamily. MetX family. As to quaternary structure, homodimer.

The protein localises to the cytoplasm. It catalyses the reaction L-homoserine + succinyl-CoA = O-succinyl-L-homoserine + CoA. It functions in the pathway amino-acid biosynthesis; L-methionine biosynthesis via de novo pathway; O-succinyl-L-homoserine from L-homoserine: step 1/1. In terms of biological role, transfers a succinyl group from succinyl-CoA to L-homoserine, forming succinyl-L-homoserine. The protein is Homoserine O-succinyltransferase of Xanthomonas campestris pv. campestris (strain ATCC 33913 / DSM 3586 / NCPPB 528 / LMG 568 / P 25).